The chain runs to 823 residues: Valine--tRNA ligase (823 aa).

Residue Lys547 coordinates ATP.

Belongs to the class-I aminoacyl-tRNA synthetase family. ValS type 2 subfamily.

It is found in the cytoplasm. The catalysed reaction is tRNA(Val) + L-valine + ATP = L-valyl-tRNA(Val) + AMP + diphosphate. Functionally, catalyzes the attachment of valine to tRNA(Val). As ValRS can inadvertently accommodate and process structurally similar amino acids such as threonine, to avoid such errors, it has a 'posttransfer' editing activity that hydrolyzes mischarged Thr-tRNA(Val) in a tRNA-dependent manner. This chain is Valine--tRNA ligase (valS), found in Aeropyrum pernix (strain ATCC 700893 / DSM 11879 / JCM 9820 / NBRC 100138 / K1).